Here is a 192-residue protein sequence, read N- to C-terminus: Elongation factor P (192 aa).

The protein belongs to the elongation factor P family.

The protein localises to the cytoplasm. It participates in protein biosynthesis; polypeptide chain elongation. Involved in peptide bond synthesis. Stimulates efficient translation and peptide-bond synthesis on native or reconstituted 70S ribosomes in vitro. Probably functions indirectly by altering the affinity of the ribosome for aminoacyl-tRNA, thus increasing their reactivity as acceptors for peptidyl transferase. In Borreliella burgdorferi (strain ATCC 35210 / DSM 4680 / CIP 102532 / B31) (Borrelia burgdorferi), this protein is Elongation factor P (efp).